Reading from the N-terminus, the 206-residue chain is Ribosomal RNA large subunit methyltransferase E (206 aa).

Residues Gly60, Trp62, Asp80, Asp96, and Asp121 each coordinate S-adenosyl-L-methionine. The active-site Proton acceptor is Lys161.

It belongs to the class I-like SAM-binding methyltransferase superfamily. RNA methyltransferase RlmE family.

Its subcellular location is the cytoplasm. The enzyme catalyses uridine(2552) in 23S rRNA + S-adenosyl-L-methionine = 2'-O-methyluridine(2552) in 23S rRNA + S-adenosyl-L-homocysteine + H(+). In terms of biological role, specifically methylates the uridine in position 2552 of 23S rRNA at the 2'-O position of the ribose in the fully assembled 50S ribosomal subunit. This chain is Ribosomal RNA large subunit methyltransferase E, found in Legionella pneumophila (strain Corby).